The primary structure comprises 374 residues: Eukaryotic translation initiation factor 3 subunit M (374 aa).

Residue serine 2 is modified to N-acetylserine. Serine 2 and serine 152 each carry phosphoserine. The region spanning 180–339 (AASKVMVELL…RKVVVSHSTH (160 aa)) is the PCI domain. Lysine 254 carries the post-translational modification N6-acetyllysine. Serine 367 is subject to Phosphoserine.

It belongs to the eIF-3 subunit M family. Component of the eukaryotic translation initiation factor 3 (eIF-3) complex, which is composed of 13 subunits: EIF3A, EIF3B, EIF3C, EIF3D, EIF3E, EIF3F, EIF3G, EIF3H, EIF3I, EIF3J, EIF3K, EIF3L and EIF3M. The eIF-3 complex appears to include 3 stable modules: module A is composed of EIF3A, EIF3B, EIF3G and EIF3I; module B is composed of EIF3F, EIF3H, and EIF3M; and module C is composed of EIF3C, EIF3D, EIF3E, EIF3K and EIF3L. EIF3C of module C binds EIF3B of module A and EIF3H of module B, thereby linking the three modules. EIF3J is a labile subunit that binds to the eIF-3 complex via EIF3B. The eIF-3 complex interacts with RPS6KB1 under conditions of nutrient depletion. Mitogenic stimulation leads to binding and activation of a complex composed of MTOR and RPTOR, leading to phosphorylation and release of RPS6KB1 and binding of EIF4B to eIF-3.

The protein localises to the cytoplasm. Functionally, component of the eukaryotic translation initiation factor 3 (eIF-3) complex, which is required for several steps in the initiation of protein synthesis. The eIF-3 complex associates with the 40S ribosome and facilitates the recruitment of eIF-1, eIF-1A, eIF-2:GTP:methionyl-tRNAi and eIF-5 to form the 43S pre-initiation complex (43S PIC). The eIF-3 complex stimulates mRNA recruitment to the 43S PIC and scanning of the mRNA for AUG recognition. The eIF-3 complex is also required for disassembly and recycling of post-termination ribosomal complexes and subsequently prevents premature joining of the 40S and 60S ribosomal subunits prior to initiation. The eIF-3 complex specifically targets and initiates translation of a subset of mRNAs involved in cell proliferation, including cell cycling, differentiation and apoptosis, and uses different modes of RNA stem-loop binding to exert either translational activation or repression. The protein is Eukaryotic translation initiation factor 3 subunit M (Eif3m) of Mus musculus (Mouse).